Reading from the N-terminus, the 488-residue chain is Probable aldehyde dehydrogenase (488 aa).

Position 240–245 (240–245 (GSSVTG)) interacts with NAD(+). Active-site residues include E262 and C296.

The protein belongs to the aldehyde dehydrogenase family.

The catalysed reaction is an aldehyde + NAD(+) + H2O = a carboxylate + NADH + 2 H(+). Involved in an alpha-terpineol oxidation system. The sequence is that of Probable aldehyde dehydrogenase (terPE) from Pseudomonas sp.